A 362-amino-acid polypeptide reads, in one-letter code: UDP-N-acetylglucosamine--N-acetylmuramyl-(pentapeptide) pyrophosphoryl-undecaprenol N-acetylglucosamine transferase (362 aa).

UDP-N-acetyl-alpha-D-glucosamine is bound by residues Thr11–Gly13, Asn124, Arg163, Ser191, Ile246, and Gln291.

It belongs to the glycosyltransferase 28 family. MurG subfamily.

The protein localises to the cell inner membrane. It carries out the reaction di-trans,octa-cis-undecaprenyl diphospho-N-acetyl-alpha-D-muramoyl-L-alanyl-D-glutamyl-meso-2,6-diaminopimeloyl-D-alanyl-D-alanine + UDP-N-acetyl-alpha-D-glucosamine = di-trans,octa-cis-undecaprenyl diphospho-[N-acetyl-alpha-D-glucosaminyl-(1-&gt;4)]-N-acetyl-alpha-D-muramoyl-L-alanyl-D-glutamyl-meso-2,6-diaminopimeloyl-D-alanyl-D-alanine + UDP + H(+). It functions in the pathway cell wall biogenesis; peptidoglycan biosynthesis. Functionally, cell wall formation. Catalyzes the transfer of a GlcNAc subunit on undecaprenyl-pyrophosphoryl-MurNAc-pentapeptide (lipid intermediate I) to form undecaprenyl-pyrophosphoryl-MurNAc-(pentapeptide)GlcNAc (lipid intermediate II). In Idiomarina loihiensis (strain ATCC BAA-735 / DSM 15497 / L2-TR), this protein is UDP-N-acetylglucosamine--N-acetylmuramyl-(pentapeptide) pyrophosphoryl-undecaprenol N-acetylglucosamine transferase.